The sequence spans 406 residues: COP9 signalosome complex subunit 4 (406 aa).

At alanine 2 the chain carries N-acetylalanine. Lysine 25 is subject to N6-acetyllysine. One can recognise a PCI domain in the interval 197 to 366 (YRRKFIEAAQ…GIVHFETREA (170 aa)).

This sequence belongs to the CSN4 family. As to quaternary structure, component of the CSN complex, composed of COPS1/GPS1, COPS2, COPS3, COPS4, COPS5, COPS6, COPS7 (COPS7A or COPS7B), COPS8 and COPS9. In the complex, it probably interacts directly with COPS1, COPS2, COPS3, COPS5, COPS6, COPS7 (COPS7A or COPS7B) and COPS8. Interacts with TOR1A; the interaction is direct and associates TOR1A and SNAPIN with the CSN complex. Interacts with STON2; controls STON2 neddylation levels. Interacts with ERCC6.

It is found in the cytoplasm. The protein resides in the nucleus. The protein localises to the cytoplasmic vesicle. Its subcellular location is the secretory vesicle. It localises to the synaptic vesicle. In terms of biological role, component of the COP9 signalosome complex (CSN), a complex involved in various cellular and developmental processes. The CSN complex is an essential regulator of the ubiquitin (Ubl) conjugation pathway by mediating the deneddylation of the cullin subunits of SCF-type E3 ligase complexes, leading to decrease the Ubl ligase activity of SCF-type complexes such as SCF, CSA or DDB2. Also involved in the deneddylation of non-cullin subunits such as STON2. The complex is also involved in phosphorylation of p53/TP53, c-jun/JUN, IkappaBalpha/NFKBIA, ITPK1, IRF8/ICSBP and SNAPIN, possibly via its association with CK2 and PKD kinases. CSN-dependent phosphorylation of TP53 and JUN promotes and protects degradation by the Ubl system, respectively. This is COP9 signalosome complex subunit 4 (Cops4) from Rattus norvegicus (Rat).